A 311-amino-acid polypeptide reads, in one-letter code: Tyrosine recombinase XerC (311 aa).

The region spanning 14 to 100 (ESLNETAKKF…SLRTFYKVLL (87 aa)) is the Core-binding (CB) domain. The Tyr recombinase domain occupies 121-303 (EVPKNFRINE…SKEKIKEVYR (183 aa)). Catalysis depends on residues arginine 163, lysine 187, histidine 255, arginine 258, and histidine 281. Tyrosine 290 serves as the catalytic O-(3'-phospho-DNA)-tyrosine intermediate.

Belongs to the 'phage' integrase family. XerC subfamily. As to quaternary structure, forms a cyclic heterotetrameric complex composed of two molecules of XerC and two molecules of XerD.

It is found in the cytoplasm. Its function is as follows. Site-specific tyrosine recombinase, which acts by catalyzing the cutting and rejoining of the recombining DNA molecules. The XerC-XerD complex is essential to convert dimers of the bacterial chromosome into monomers to permit their segregation at cell division. It also contributes to the segregational stability of plasmids. The sequence is that of Tyrosine recombinase XerC from Leptospira interrogans serogroup Icterohaemorrhagiae serovar copenhageni (strain Fiocruz L1-130).